The sequence spans 195 residues: Proteasome subunit beta 1 (195 aa).

The propeptide at 1 to 6 (MEELPA) is removed in mature form; by autocatalysis. Thr-7 (nucleophile) is an active-site residue.

Belongs to the peptidase T1B family. In terms of assembly, the 20S proteasome core is composed of 14 alpha and 14 beta subunits that assemble into four stacked heptameric rings, resulting in a barrel-shaped structure. The two inner rings, each composed of seven catalytic beta subunits, are sandwiched by two outer rings, each composed of seven alpha subunits. The catalytic chamber with the active sites is on the inside of the barrel. Has a gated structure, the ends of the cylinder being occluded by the N-termini of the alpha-subunits. Is capped at one or both ends by the proteasome regulatory ATPase, PAN.

Its subcellular location is the cytoplasm. It catalyses the reaction Cleavage of peptide bonds with very broad specificity.. The formation of the proteasomal ATPase PAN-20S proteasome complex, via the docking of the C-termini of PAN into the intersubunit pockets in the alpha-rings, triggers opening of the gate for substrate entry. Interconversion between the open-gate and close-gate conformations leads to a dynamic regulation of the 20S proteasome proteolysis activity. Component of the proteasome core, a large protease complex with broad specificity involved in protein degradation. This chain is Proteasome subunit beta 1, found in Sulfolobus acidocaldarius (strain ATCC 33909 / DSM 639 / JCM 8929 / NBRC 15157 / NCIMB 11770).